A 294-amino-acid polypeptide reads, in one-letter code: Phosphoribosylaminoimidazole-succinocarboxamide synthase (294 aa).

Belongs to the SAICAR synthetase family.

It catalyses the reaction 5-amino-1-(5-phospho-D-ribosyl)imidazole-4-carboxylate + L-aspartate + ATP = (2S)-2-[5-amino-1-(5-phospho-beta-D-ribosyl)imidazole-4-carboxamido]succinate + ADP + phosphate + 2 H(+). It functions in the pathway purine metabolism; IMP biosynthesis via de novo pathway; 5-amino-1-(5-phospho-D-ribosyl)imidazole-4-carboxamide from 5-amino-1-(5-phospho-D-ribosyl)imidazole-4-carboxylate: step 1/2. The chain is Phosphoribosylaminoimidazole-succinocarboxamide synthase from Rhodococcus jostii (strain RHA1).